The chain runs to 344 residues: Axoneme-associated protein mst101(1) (344 aa).

A run of 12 repeats spans residues 74–89 (KKKCAEAAKKEKEAAE), 90–105 (KKKCAEAAKKEKEAAE), 106–121 (KKKCAEAAKKEKEAAE), 122–137 (KKKCAEAAKKEKEAAE), 138–153 (KKKCAEAAKKEKEAAE), 154–169 (KKKCAEAAKKEKEAAE), 170–185 (KKKCAEAAQKKKCAEL), 186–201 (AKKEQEAAEKKKCAEA), 202–217 (AKKEKEAAEKKKCEER), 218–233 (AKKEKEAAEKKKCEER), 234–249 (AKKEKEAAEKKKCAEA), and 250–265 (AKKEKEAAEKKKCAEA). Positions 74 to 344 (KKKCAEAAKK…AAQKKCEPKK (271 aa)) are 17 X 16 AA approximate tandem repeats of K-K-K-C-X-E-X-A-[KQ]-K-X-X-E-X-A-X. The tract at residues 206–244 (KEAAEKKKCEERAKKEKEAAEKKKCEERAKKEKEAAEKK) is disordered. A 13; approximate repeat occupies 266-281 (AQKKKCAELAKKAKEA). One copy of the 14; approximate repeat lies at 282-297 (AEKKKCAKKAGEKGSK). Basic and acidic residues predominate over residues 285–315 (KKCAKKAGEKGSKQSGSDKGKKNGKKNDMKN). Residues 285-318 (KKCAKKAGEKGSKQSGSDKGKKNGKKNDMKNKCA) form a disordered region. The 15; approximate repeat unit spans residues 298 to 313 (QSGSDKGKKNGKKNDM). Repeat 16 spans residues 314–329 (KNKCAMLAKKAKEEAL). A 17; truncated repeat occupies 330-344 (KKKCAAAQKKCEPKK).

In terms of tissue distribution, testis. Located in spermatocytes and spermatid bundles.

The protein resides in the cytoplasm. Its function is as follows. Possible structural role in the sperm tail. It is associated with axonemal structures. The polypeptide is Axoneme-associated protein mst101(1) (mst101(1)) (Drosophila hydei (Fruit fly)).